Consider the following 1715-residue polypeptide: Ubiquitin carboxyl-terminal hydrolase 32 (1715 aa).

EF-hand domains are found at residues 161–196 and 197–232; these read IPKN…ACRG and PGVE…LLLV. Ca(2+)-binding residues include aspartate 174, asparagine 176, aspartate 178, histidine 180, glutamate 185, aspartate 210, aspartate 212, aspartate 214, and glutamate 221. Positions 314 to 492 constitute a DUSP domain; that stretch reads QCKHMENDIV…DNLPLPRQVI (179 aa). Positions 393 to 429 are disordered; sequence QHDSYSLGSGTGSASGSGSASSGISAGRHCGPVRPGP. The segment covering 408–419 has biased composition (low complexity); it reads GSGSASSGISAG. Residues 677 to 1675 form the USP domain; sequence TGLHNLGNTC…AAYLLFYERK (999 aa). Cysteine 686 (nucleophile) is an active-site residue. Polar residues-rich tracts occupy residues 1103–1126 and 1150–1164; these read TESN…SSLT and YRTS…STGH. 2 disordered regions span residues 1103–1213 and 1536–1569; these read TESN…PHKA and DEID…GNIL. Residues 1171 to 1180 are compositionally biased toward acidic residues; that stretch reads DVDEQAEEGN. A compositionally biased stretch (polar residues) spans 1188 to 1209; it reads DQITTSQPETSSGVYSRRSSQP. Over residues 1540 to 1549 the composition is skewed to basic and acidic residues; it reads APSKEVKEEL. The span at 1550-1559 shows a compositional bias: polar residues; sequence PNQTGSTKAT. Residue histidine 1633 is the Proton acceptor of the active site.

It belongs to the peptidase C19 family. USP20/USP33 subfamily.

It carries out the reaction Thiol-dependent hydrolysis of ester, thioester, amide, peptide and isopeptide bonds formed by the C-terminal Gly of ubiquitin (a 76-residue protein attached to proteins as an intracellular targeting signal).. Deubiquitinating enzyme that acts as an inhibitor of mitophagy probably by counteracting the action of park. Possibly functions by hydrolyzing ubiquitin attached by park on target proteins, thereby reducing park's ability to drive mitophagy. The protein is Ubiquitin carboxyl-terminal hydrolase 32 of Drosophila melanogaster (Fruit fly).